Consider the following 203-residue polypeptide: Endo-type membrane-bound lytic murein transglycosylase A (203 aa).

An N-terminal signal peptide occupies residues 1–15 (MKLRWFAFLVVILAG). Residue cysteine 16 is the site of N-palmitoyl cysteine attachment. Residue cysteine 16 is the site of S-diacylglycerol cysteine attachment.

This sequence belongs to the transglycosylase Slt family.

The protein localises to the cell outer membrane. The catalysed reaction is Endolytic cleavage of the (1-&gt;4)-beta-glycosidic linkage between N-acetylmuramic acid (MurNAc) and N-acetylglucosamine (GlcNAc) residues in peptidoglycan with concomitant formation of a 1,6-anhydrobond in the MurNAc residue.. In terms of biological role, murein-degrading enzyme. May play a role in recycling of muropeptides during cell elongation and/or cell division. Preferentially cleaves at a distance of more than two disaccharide units from the ends of the glycan chain. The chain is Endo-type membrane-bound lytic murein transglycosylase A from Salmonella paratyphi C (strain RKS4594).